The sequence spans 430 residues: Purine nucleoside phosphorylase LACC1 (430 aa).

Position 247 is an N6-acetyllysine (K247). Residues H250, C284, and H301 each contribute to the Zn(2+) site.

The protein belongs to the purine nucleoside phosphorylase YfiH/LACC1 family. As to quaternary structure, interacts with FASN. Interacts with SDHA. Interacts with ATF6, EIF2AK3 and ERN1. In terms of processing, phosphorylated on tyrosine residues. In terms of tissue distribution, ubiquitously expressed, with higher expression levels in immune-related tissues such as lymph nodes and spleen. Expressed in both intestinal and peripheral myeloid-derived cells.

Its subcellular location is the cytoplasm. It is found in the nucleus. The protein localises to the endoplasmic reticulum. It localises to the peroxisome. The enzyme catalyses adenosine + phosphate = alpha-D-ribose 1-phosphate + adenine. It catalyses the reaction inosine + phosphate = alpha-D-ribose 1-phosphate + hypoxanthine. The catalysed reaction is guanosine + phosphate = alpha-D-ribose 1-phosphate + guanine. It carries out the reaction S-methyl-5'-thioadenosine + phosphate = 5-(methylsulfanyl)-alpha-D-ribose 1-phosphate + adenine. The enzyme catalyses adenosine + H2O + H(+) = inosine + NH4(+). Its function is as follows. Purine nucleoside enzyme that catalyzes the phosphorolysis of adenosine, guanosine and inosine nucleosides, yielding D-ribose 1-phosphate and the respective free bases, adenine, guanine and hypoxanthine. Also catalyzes the phosphorolysis of S-methyl-5'-thioadenosine into adenine and S-methyl-5-thio-alpha-D-ribose 1-phosphate. Also has adenosine deaminase activity. Acts as a regulator of innate immunity in macrophages by modulating the purine nucleotide metabolism, thereby regulating the metabolic function and bioenergetic state of macrophages. Enables a purine nucleotide cycle between adenosine and inosine monophosphate and adenylosuccinate that prevents cytoplasmic acidification and balances the cytoplasmic-mitochondrial redox interface. The purine nucleotide cycle consumes aspartate and releases fumarate in a manner involving fatty acid oxidation and ATP-citrate lyase activity. Participates in pattern recognition receptor (PRR)-induced cytokines in macrophages: associates with the NOD2-signaling complex and promotes optimal NOD2-induced signaling, cytokine secretion and bacterial clearance. Localizes to the endoplasmic reticulum upon PRR stimulation of macrophages and associates with endoplasmic reticulum-stress sensors, promoting the endoplasmic reticulum unfolded protein response (UPR). Does not show laccase activity. This is Purine nucleoside phosphorylase LACC1 from Homo sapiens (Human).